The primary structure comprises 416 residues: MGLSKLSISDVDLKGKRVLIRVDFNVPMKDGKVTNTQRIAAAIPTIKYALDKGAKSVVLMSHLGRPDGHKVDKYSLKPVCPEVSKLLGKEVTFLNDCVGPDVVNACANPAPGSVFLLENLRFHVEEEGKGVSPTGEKTKATADQIKAFSESLTKLGDVYVNDAFGTAHRAHASMVGCQLPQKACGFLMNKELTYFAKALENPERPFLAILGGAKVSDKIQLINNMLDKVNELIIGGGMAYTFLKQIHNMHIGNSLFDAPGAEIVHKVMETAKAKNVAIHLPVDFVTADKFADDANTEIRTIQSGIADGWMGLDIGPKTIEEFSKVISRAKTIVWNGPMGVFEMDKFATGTKAAMDEVVKATKNGATTIIGGGDTATCCAKWDTEDKVSHVSTGGGASLELLEGKQLPGVVALTDAH.

Residues Val22, Asp23, Phe24, Asn25, Gln37, Arg38, Ser61, His62, Gly64, Arg65, Leu120, Arg121, His168, and Arg169 each contribute to the (2R)-3-phosphoglycerate site. An ADP-binding site is contributed by Gly212. Residue Gly212 coordinates CDP. AMP contacts are provided by Ala213 and Lys214. Position 213 (Ala213) interacts with ATP. Ala213 serves as a coordination point for Mg(2+). Asp217 is a binding site for CDP. Asp217 is a binding site for Mg(2+). AMP is bound at residue Lys218. Position 218 (Lys218) interacts with ATP. An ADP-binding site is contributed by Gly236. Gly236 contributes to the CDP binding site. Residues Gly237 and Gly311 each contribute to the AMP site. Residues Gly237 and Gly311 each coordinate ATP. The CDP site is built by Gly336 and Phe341. Phe341 lines the ADP pocket. Glu342 is a binding site for AMP. ATP is bound by residues Glu342, Asp373, and Thr374. Asp373 serves as a coordination point for Mg(2+).

Belongs to the phosphoglycerate kinase family. As to quaternary structure, monomer. Requires Mg(2+) as cofactor. Expressed in all cells of the worm (at protein level), higher expression in the cells associated with the tubercles (tegumental modifications), the muscle and along the tegument.

The catalysed reaction is (2R)-3-phosphoglycerate + ATP = (2R)-3-phospho-glyceroyl phosphate + ADP. The protein operates within carbohydrate degradation; glycolysis; pyruvate from D-glyceraldehyde 3-phosphate: step 2/5. Its function is as follows. Involved in the seventh step in glycolysis. Catalyzes the conversion of 1,3-bisphosphoglycerate ((2R)-3-phospho-glyceroyl phosphate) to 3-phosphoglycerate ((2R)-3-phosphoglycerate) and results in the formation of ATP. Associated with the tegument to provide the energy needed for the tegumental repair resulting from immune damage. The protein is Phosphoglycerate kinase (PGK) of Schistosoma mansoni (Blood fluke).